We begin with the raw amino-acid sequence, 166 residues long: Crossover junction endodeoxyribonuclease RuvC (166 aa).

Active-site residues include Asp7, Glu68, and Asp141. Mg(2+)-binding residues include Asp7, Glu68, and Asp141.

It belongs to the RuvC family. In terms of assembly, homodimer which binds Holliday junction (HJ) DNA. The HJ becomes 2-fold symmetrical on binding to RuvC with unstacked arms; it has a different conformation from HJ DNA in complex with RuvA. In the full resolvosome a probable DNA-RuvA(4)-RuvB(12)-RuvC(2) complex forms which resolves the HJ. Mg(2+) serves as cofactor.

It localises to the cytoplasm. It catalyses the reaction Endonucleolytic cleavage at a junction such as a reciprocal single-stranded crossover between two homologous DNA duplexes (Holliday junction).. Functionally, the RuvA-RuvB-RuvC complex processes Holliday junction (HJ) DNA during genetic recombination and DNA repair. Endonuclease that resolves HJ intermediates. Cleaves cruciform DNA by making single-stranded nicks across the HJ at symmetrical positions within the homologous arms, yielding a 5'-phosphate and a 3'-hydroxyl group; requires a central core of homology in the junction. The consensus cleavage sequence is 5'-(A/T)TT(C/G)-3'. Cleavage occurs on the 3'-side of the TT dinucleotide at the point of strand exchange. HJ branch migration catalyzed by RuvA-RuvB allows RuvC to scan DNA until it finds its consensus sequence, where it cleaves and resolves the cruciform DNA. This is Crossover junction endodeoxyribonuclease RuvC from Koribacter versatilis (strain Ellin345).